Reading from the N-terminus, the 165-residue chain is Large ribosomal subunit protein uL10 (165 aa).

It belongs to the universal ribosomal protein uL10 family. Part of the ribosomal stalk of the 50S ribosomal subunit. The N-terminus interacts with L11 and the large rRNA to form the base of the stalk. The C-terminus forms an elongated spine to which L12 dimers bind in a sequential fashion forming a multimeric L10(L12)X complex.

Its function is as follows. Forms part of the ribosomal stalk, playing a central role in the interaction of the ribosome with GTP-bound translation factors. The sequence is that of Large ribosomal subunit protein uL10 from Buchnera aphidicola subsp. Schizaphis graminum (strain Sg).